Consider the following 92-residue polypeptide: DNA-directed RNA polymerase subunit omega (92 aa).

It belongs to the RNA polymerase subunit omega family. The RNAP catalytic core consists of 2 alpha, 1 beta, 1 beta' and 1 omega subunit. When a sigma factor is associated with the core the holoenzyme is formed, which can initiate transcription.

It catalyses the reaction RNA(n) + a ribonucleoside 5'-triphosphate = RNA(n+1) + diphosphate. Functionally, promotes RNA polymerase assembly. Latches the N- and C-terminal regions of the beta' subunit thereby facilitating its interaction with the beta and alpha subunits. The polypeptide is DNA-directed RNA polymerase subunit omega (Corynebacterium diphtheriae (strain ATCC 700971 / NCTC 13129 / Biotype gravis)).